The chain runs to 427 residues: Mitochondrial distribution and morphology protein 12 (427 aa).

Residues 1-387 (MSFDINWNQL…WPSWICIDMN (387 aa)) enclose the SMP-LTD domain. Positions 81 to 96 (NDSKDEHLKNHGDGIN) are enriched in basic and acidic residues. 2 disordered regions span residues 81–168 (NDSK…APPL) and 387–427 (NDDD…EAGE). Acidic residues predominate over residues 106–133 (LDDEDEDDEDDDEDDEDEEEEDEDDYDD). Polar residues predominate over residues 146-161 (LNFNENSTTPSANSFA). Positions 387 to 402 (NDDDDEEEEEESEDND) are enriched in acidic residues. Residues 411–427 (NDGKHGDGRTDETEAGE) are compositionally biased toward basic and acidic residues.

This sequence belongs to the MDM12 family. As to quaternary structure, component of the ER-mitochondria encounter structure (ERMES) or MDM complex, composed of MMM1, MDM10, MDM12 and MDM34. An MMM1 homodimer associates with one molecule of MDM12 on each side in a pairwise head-to-tail manner, and the SMP-LTD domains of MMM1 and MDM12 generate a continuous hydrophobic tunnel for phospholipid trafficking.

Its subcellular location is the mitochondrion outer membrane. The protein localises to the endoplasmic reticulum membrane. Its function is as follows. Component of the ERMES/MDM complex, which serves as a molecular tether to connect the endoplasmic reticulum (ER) and mitochondria. Components of this complex are involved in the control of mitochondrial shape and protein biogenesis, and function in nonvesicular lipid trafficking between the ER and mitochondria. MDM12 is required for the interaction of the ER-resident membrane protein MMM1 and the outer mitochondrial membrane-resident beta-barrel protein MDM10. The MDM12-MMM1 subcomplex functions in the major beta-barrel assembly pathway that is responsible for biogenesis of all mitochondrial outer membrane beta-barrel proteins, and acts in a late step after the SAM complex. The MDM10-MDM12-MMM1 subcomplex further acts in the TOM40-specific pathway after the action of the MDM12-MMM1 complex. Essential for establishing and maintaining the structure of mitochondria and maintenance of mtDNA nucleoids. The protein is Mitochondrial distribution and morphology protein 12 of Candida albicans (strain WO-1) (Yeast).